A 1216-amino-acid polypeptide reads, in one-letter code: ATP-dependent helicase/nuclease subunit A (1216 aa).

Positions 26–488 constitute a UvrD-like helicase ATP-binding domain; the sequence is QKKTAEQIEA…ILLKENFRSS (463 aa). 47-54 contributes to the ATP binding site; that stretch reads ASAGSGKT. Residues 515 to 802 form the UvrD-like helicase C-terminal domain; that stretch reads KHQLVFANTK…ELMTIHKSKG (288 aa).

The protein belongs to the helicase family. AddA subfamily. In terms of assembly, heterodimer of AddA and AddB/RexB. The cofactor is Mg(2+).

The enzyme catalyses Couples ATP hydrolysis with the unwinding of duplex DNA by translocating in the 3'-5' direction.. The catalysed reaction is ATP + H2O = ADP + phosphate + H(+). In terms of biological role, the heterodimer acts as both an ATP-dependent DNA helicase and an ATP-dependent, dual-direction single-stranded exonuclease. Recognizes the chi site generating a DNA molecule suitable for the initiation of homologous recombination. The AddA nuclease domain is required for chi fragment generation; this subunit has the helicase and 3' -&gt; 5' nuclease activities. This is ATP-dependent helicase/nuclease subunit A from Streptococcus pneumoniae (strain CGSP14).